Reading from the N-terminus, the 422-residue chain is Glutamyl-tRNA reductase (422 aa).

Substrate-binding positions include 49–52 (TCNR), Ser107, 112–114 (EPQ), and Gln118. The Nucleophile role is filled by Cys50. 187–192 (GAGETI) is a binding site for NADP(+).

It belongs to the glutamyl-tRNA reductase family. Homodimer.

It carries out the reaction (S)-4-amino-5-oxopentanoate + tRNA(Glu) + NADP(+) = L-glutamyl-tRNA(Glu) + NADPH + H(+). The protein operates within porphyrin-containing compound metabolism; protoporphyrin-IX biosynthesis; 5-aminolevulinate from L-glutamyl-tRNA(Glu): step 1/2. Functionally, catalyzes the NADPH-dependent reduction of glutamyl-tRNA(Glu) to glutamate 1-semialdehyde (GSA). The polypeptide is Glutamyl-tRNA reductase (Pseudomonas paraeruginosa (strain DSM 24068 / PA7) (Pseudomonas aeruginosa (strain PA7))).